The following is a 303-amino-acid chain: NAD(+)--arginine ADP-ribosyltransferase Lart1 (303 aa).

It localises to the secreted. The catalysed reaction is L-arginyl-[protein] + NAD(+) = N(omega)-(ADP-D-ribosyl)-L-arginyl-[protein] + nicotinamide + H(+). ADP-ribosyltransferase that targets a specific class of NAD(+)-dependent glutamate dehydrogenase (GDH) enzymes found in fungi and protists, including many natural hosts of Legionella. Acts by targeting a conserved arginine residue in the NAD(+)-binding pocket of GDH, thereby blocking oxidative deamination of glutamate. Lart1 may target amoeba GDH to prevent a conserved stress response. In vitro, acts on Glud2 from the amoeba Dictyostelium discoideum (DdGluD2) and yeast Gdh2p but does not act on human or Legionella GDH homologs. This is NAD(+)--arginine ADP-ribosyltransferase Lart1 from Legionella pneumophila subsp. pneumophila (strain Philadelphia 1 / ATCC 33152 / DSM 7513).